Reading from the N-terminus, the 300-residue chain is MSYRELVVELAREHAEALSDALLDLGALSVSVEDADADTPDEQPLFGEPGLVPDRTAWQHSRVVALLSADHEPAVLLAAAANEIGLAETPKFVVREVEEQDWVRLTQSQFEPIPIGERIWVVPSWHDAPDPDALVLELDPGLAFGTGSHPTTRLCMEWLEQSVKPGQSVLDYGCGSGILAILAKKCGANPVIGIDIDPQAVESARQNSERNRAEVTYGLPDACPDGEFDIVVANILSNPLKLMASMLASKVKPGGRIALSGVLARQADEVAAVYARYVDISVWREHEGWVCLAGTRRESH.

Thr152, Gly173, Asp195, and Asn234 together coordinate S-adenosyl-L-methionine.

It belongs to the methyltransferase superfamily. PrmA family.

It localises to the cytoplasm. The catalysed reaction is L-lysyl-[protein] + 3 S-adenosyl-L-methionine = N(6),N(6),N(6)-trimethyl-L-lysyl-[protein] + 3 S-adenosyl-L-homocysteine + 3 H(+). Methylates ribosomal protein L11. In Burkholderia cenocepacia (strain HI2424), this protein is Ribosomal protein L11 methyltransferase.